The primary structure comprises 412 residues: Pyruvate dehydrogenase E1 component subunit alpha, mitochondrial (412 aa).

11 residues coordinate pyruvate: His-104, Tyr-130, Arg-131, Ala-169, Gly-177, Val-179, Asp-208, Gly-209, Ala-210, Asn-237, and Tyr-239. Thiamine diphosphate-binding residues include Tyr-130 and Arg-131. Positions 177, 179, 208, 209, 210, and 237 each coordinate thiamine diphosphate. Asp-208 contributes to the Mg(2+) binding site. The Mg(2+) site is built by Asn-237 and Tyr-239. His-304 contacts thiamine diphosphate.

Tetramer of 2 alpha and 2 beta subunits. Requires thiamine diphosphate as cofactor. The cofactor is Mg(2+).

Its subcellular location is the mitochondrion matrix. It catalyses the reaction N(6)-[(R)-lipoyl]-L-lysyl-[protein] + pyruvate + H(+) = N(6)-[(R)-S(8)-acetyldihydrolipoyl]-L-lysyl-[protein] + CO2. E1 activity is regulated by phosphorylation (inactivation) and dephosphorylation (activation) of the alpha subunit. The pyruvate dehydrogenase complex catalyzes the overall conversion of pyruvate to acetyl-CoA and CO(2). It contains multiple copies of three enzymatic components: pyruvate dehydrogenase (E1), dihydrolipoamide acetyltransferase (E2) and lipoamide dehydrogenase (E3). This is Pyruvate dehydrogenase E1 component subunit alpha, mitochondrial (PDA1) from Kluyveromyces lactis (strain ATCC 8585 / CBS 2359 / DSM 70799 / NBRC 1267 / NRRL Y-1140 / WM37) (Yeast).